The sequence spans 277 residues: Trypsin-2 (277 aa).

An N-terminal signal peptide occupies residues 1–19; sequence MSNKIAILLLAVVVAVVAC. Residues 20-50 constitute a propeptide, activation peptide; it reads AQAQPSRRHHLVHPLLPRFLPRLHRDSNGHR. Positions 51–276 constitute a Peptidase S1 domain; sequence VVGGFQIDVS…VRDWVRENSG (226 aa). Cys76 and Cys92 are oxidised to a cystine. Active-site charge relay system residues include His91 and Asp136. Disulfide bonds link Cys201/Cys217 and Cys228/Cys252. The Charge relay system role is filled by Ser232.

This sequence belongs to the peptidase S1 family. As to expression, midgut.

It is found in the secreted. It carries out the reaction Preferential cleavage: Arg-|-Xaa, Lys-|-Xaa.. Major function may be to aid in digestion of the blood meal. This Anopheles gambiae (African malaria mosquito) protein is Trypsin-2 (TRYP2).